A 413-amino-acid chain; its full sequence is Probable glucan 1,3-beta-glucosidase ARB_04467 (413 aa).

The signal sequence occupies residues 1–17; sequence MKFGSLLGLSLVGLSVA. Substrate is bound by residues glutamate 46, glutamate 202, and tyrosine 262. The active-site Proton donor is the glutamate 202. Cysteine 282 and cysteine 412 form a disulfide bridge. Catalysis depends on glutamate 300, which acts as the Nucleophile.

This sequence belongs to the glycosyl hydrolase 5 (cellulase A) family. In terms of assembly, monomer.

Its subcellular location is the secreted. The protein resides in the cell wall. It carries out the reaction Successive hydrolysis of beta-D-glucose units from the non-reducing ends of (1-&gt;3)-beta-D-glucans, releasing alpha-glucose.. Its function is as follows. Major glucan 1,3-beta-glucosidase required for cell wall integrity. Beta-glucanases participate in the metabolism of beta-glucan, the main structural component of the cell wall. Can also function biosynthetically as a transglycosylase. Functions to deliver glucan from the cell to the extracellular matrix. Involved in cell-substrate and cell-cell adhesion. The protein is Probable glucan 1,3-beta-glucosidase ARB_04467 of Arthroderma benhamiae (strain ATCC MYA-4681 / CBS 112371) (Trichophyton mentagrophytes).